The primary structure comprises 460 residues: Biphenyl 2,3-dioxygenase subunit alpha (460 aa).

A Rieske domain is found at 56-165; that stretch reads WLLMGHETQI…VETYKGLIFA (110 aa). [2Fe-2S] cluster contacts are provided by Cys-98, His-100, Cys-118, and His-121. Substrate is bound at residue 217–230; that stretch reads QFCSDMYHAGTTSH. Fe cation contacts are provided by His-224, His-230, and Asp-378.

The protein belongs to the bacterial ring-hydroxylating dioxygenase alpha subunit family. As to quaternary structure, heterohexamer consisting of three BphA1 subunits and three BphA2 subunits. The multicomponent biphenyl dioxygenase system is composed of a ferredoxin reductase (BphA4), a ferredoxin (BphA3), and a terminal oxygenase (BphA1A2). [2Fe-2S] cluster serves as cofactor. The cofactor is Fe cation.

It carries out the reaction biphenyl + NADH + O2 + H(+) = (2R,3S)-3-phenylcyclohexa-3,5-diene-1,2-diol + NAD(+). The protein operates within xenobiotic degradation; biphenyl degradation; 2-hydroxy-2,4-pentadienoate and benzoate from biphenyl: step 1/4. In terms of biological role, part of the oxygenase component of the biphenyl dioxygenase system that catalyzes the stereospecific dihydroxylation of the aromatic ring of biphenyl, yielding a dihydrodiol compound. Is essential for biphenyl degradation and growth of Rhodococcus sp. strain RHA1 on biphenyl as the sole source of carbon and energy. Can also use naphtalene and 4-chlorobiphenyl (4-CB) as substrates, as well as some polychlorinated biphenyls (PCB) such as 2,2'-dichlorobiphenyl, 2,3-dichlorobiphenyl and 2,5,2'-trichlorobiphenyl. Exhibits weak activity toward dibenzofuran and dibenzo-p-dioxin. Electrons are transferred from NADH to the [2Fe-2S] cluster in BphA1 via FAD of BphA4 and [2Fe-2S] cluster of BphA3. This is Biphenyl 2,3-dioxygenase subunit alpha from Rhodococcus jostii (strain RHA1).